Consider the following 234-residue polypeptide: Peptidase E (234 aa).

Catalysis depends on charge relay system residues serine 120, aspartate 135, and histidine 157.

This sequence belongs to the peptidase S51 family.

The protein localises to the cytoplasm. It carries out the reaction Dipeptidase E catalyzes the hydrolysis of dipeptides Asp-|-Xaa. It does not act on peptides with N-terminal Glu, Asn or Gln, nor does it cleave isoaspartyl peptides.. In terms of biological role, hydrolyzes dipeptides containing N-terminal aspartate residues. May play a role in allowing the cell to use peptide aspartate to spare carbon otherwise required for the synthesis of the aspartate family of amino acids. This Salmonella gallinarum (strain 287/91 / NCTC 13346) protein is Peptidase E.